The following is a 291-amino-acid chain: E3 ubiquitin-protein ligase MARCHF8 (291 aa).

Residues 22-72 (YRSKTKEKEREEQNEKTLGHFMSHSSNISKAGSPPSASAPAPVSSFSRTSI) are disordered. The segment covering 25–39 (KTKEKEREEQNEKTL) has biased composition (basic and acidic residues). A compositionally biased stretch (low complexity) spans 50–72 (SKAGSPPSASAPAPVSSFSRTSI). The RING-CH-type zinc-finger motif lies at 72–133 (ITPSSQDICR…ELCKYEFIME (62 aa)). Zn(2+)-binding residues include Cys-80, Cys-83, Cys-97, Cys-99, His-107, Cys-110, Cys-123, and Cys-126. The next 2 membrane-spanning stretches (helical) occupy residues 157–177 (CSVTFHVIAITCVVWSLYVLI) and 197–217 (FWTKLVVVAIGFTGGLLFMYV). The residue at position 253 (Ser-253) is a Phosphoserine.

In terms of assembly, interacts with CD86. As to expression, broadly expressed. Present in immature dendritic cells (at protein level).

The protein localises to the golgi apparatus membrane. It localises to the endoplasmic reticulum membrane. It is found in the cytoplasmic vesicle membrane. Its subcellular location is the lysosome membrane. The protein resides in the early endosome membrane. It carries out the reaction S-ubiquitinyl-[E2 ubiquitin-conjugating enzyme]-L-cysteine + [acceptor protein]-L-lysine = [E2 ubiquitin-conjugating enzyme]-L-cysteine + N(6)-ubiquitinyl-[acceptor protein]-L-lysine.. Its pathway is protein modification; protein ubiquitination. Functionally, E3 ubiquitin-protein ligase that plays several important roles in innate immunity and adaptive immunity. Mediates ubiquitination of CD86 and MHC class II proteins, such as HLA-DR alpha and beta, and promotes their subsequent endocytosis and sorting to lysosomes via multivesicular bodies. Possesses a very broad antiviral activity by specifically inactivating different viral fusion proteins. Targets and ubiquitinates cytoplasmic lysine residues of viral envelope glycoproteins with single transmembrane domains leading to their lysosomal degradation. Therefore, shows broad-spectrum inhibition against many viruses including retroviruses, rhabdoviruses, arenaviruses, sarbecoviruses or influenzaviruses. Strongly blocks human immunodeficiency virus type 1 envelope glycoprotein incorporation into virions by down-regulating its cell surface expression. Also blocks ebola virus glycoprotein/GP incorporation via surface down-regulation. Mediates 'Lys-63'-linked polyubiquitination of influenza M2 to target it to lysosome for degradation. Mediates the regulation of constitutive ubiquitination and trafficking of the viral restriction factor BST2 within the endocytic pathway. Plays a role in maintenance of immune tolerance to self by promoting the turnover and proteasomal degradation of PD-L1/CD274 via ubiquitination. Catalyzes the 'Lys-63'-linked polyubiquitylation of cGAS thereby inhibiting its DNA binding ability and impairing its antiviral innate immunity. Negatively regulates IL7-mediated T-cell homeostasis by mediating 'Lys-27'-linked polyubiquitination of IL7R, leading to its lysosomal degradation. Its function is as follows. (Microbial infection) Mediates 'Lys-63'-linked polyubiquitination of hepatitis C virus/HCV protein NS2 which allows its binding to HGS, an ESCRT-0 complex component, and this interaction is essential for HCV envelopment. The sequence is that of E3 ubiquitin-protein ligase MARCHF8 from Homo sapiens (Human).